The sequence spans 363 residues: Outer membrane protein P2 (363 aa).

The N-terminal stretch at 1–20 (MKKTLAALIVGAFAASAANA) is a signal peptide.

The protein belongs to the Gram-negative porin family. Homotrimer.

Its subcellular location is the cell outer membrane. In terms of biological role, forms pores that allow passive diffusion of small molecules across the outer membrane. The polypeptide is Outer membrane protein P2 (ompP2) (Haemophilus influenzae).